The chain runs to 510 residues: NAD(P)H-quinone oxidoreductase subunit 2 B, chloroplastic (510 aa).

13 consecutive transmembrane segments (helical) span residues 24 to 44, 57 to 77, 99 to 119, 124 to 144, 150 to 170, 183 to 203, 229 to 249, 295 to 315, 323 to 343, 347 to 367, 395 to 415, 418 to 438, and 484 to 504; these read LLLFHGSFILPECILIFGLIL, IPWLYFISSTSLVMSITALLF, IFQFLILLCSTLCIPLSVEYI, MAITEFLLFVLTATLGGMFLC, ITIFVAPECFSLCSYLLSGYT, YLLMGGASSSILVHGFSWLYG, ISIALIFITVGIGFKLSPAPF, WHLLLEILAILSMILGNLVAI, MLAYSSIGQIGYVIIGIIVGD, GYASMITYMLFYISMNLGTFA, ALSSALCLLSLGGLPPLAGFF, LHLFWCGWQAGLYFLVSIGLL, and MIVCVIASTIPGISMNPIIAI.

It belongs to the complex I subunit 2 family. NDH is composed of at least 16 different subunits, 5 of which are encoded in the nucleus.

It localises to the plastid. The protein localises to the chloroplast thylakoid membrane. The enzyme catalyses a plastoquinone + NADH + (n+1) H(+)(in) = a plastoquinol + NAD(+) + n H(+)(out). It carries out the reaction a plastoquinone + NADPH + (n+1) H(+)(in) = a plastoquinol + NADP(+) + n H(+)(out). NDH shuttles electrons from NAD(P)H:plastoquinone, via FMN and iron-sulfur (Fe-S) centers, to quinones in the photosynthetic chain and possibly in a chloroplast respiratory chain. The immediate electron acceptor for the enzyme in this species is believed to be plastoquinone. Couples the redox reaction to proton translocation, and thus conserves the redox energy in a proton gradient. This chain is NAD(P)H-quinone oxidoreductase subunit 2 B, chloroplastic, found in Ceratophyllum demersum (Rigid hornwort).